Here is a 172-residue protein sequence, read N- to C-terminus: Small ribosomal subunit protein uS4 (172 aa).

An S4 RNA-binding domain is found at 104–168; that stretch reads RRLQTIVYRK…SPLAKMAQGG (65 aa).

This sequence belongs to the universal ribosomal protein uS4 family. As to quaternary structure, part of the 30S ribosomal subunit. Contacts protein S5. The interaction surface between S4 and S5 is involved in control of translational fidelity.

In terms of biological role, one of the primary rRNA binding proteins, it binds directly to 16S rRNA where it nucleates assembly of the body of the 30S subunit. With S5 and S12 plays an important role in translational accuracy. The sequence is that of Small ribosomal subunit protein uS4 from Thermofilum pendens (strain DSM 2475 / Hrk 5).